A 217-amino-acid polypeptide reads, in one-letter code: 3,4-dihydroxy-2-butanone 4-phosphate synthase (217 aa).

D-ribulose 5-phosphate-binding positions include 37-38 (RE), Asp42, 150-154 (RGGHT), and Glu174. Glu38 is a binding site for Mg(2+). His153 contributes to the Mg(2+) binding site.

The protein belongs to the DHBP synthase family. As to quaternary structure, homodimer. It depends on Mg(2+) as a cofactor. Requires Mn(2+) as cofactor.

It catalyses the reaction D-ribulose 5-phosphate = (2S)-2-hydroxy-3-oxobutyl phosphate + formate + H(+). It participates in cofactor biosynthesis; riboflavin biosynthesis; 2-hydroxy-3-oxobutyl phosphate from D-ribulose 5-phosphate: step 1/1. Functionally, catalyzes the conversion of D-ribulose 5-phosphate to formate and 3,4-dihydroxy-2-butanone 4-phosphate. The polypeptide is 3,4-dihydroxy-2-butanone 4-phosphate synthase (Salmonella paratyphi A (strain ATCC 9150 / SARB42)).